Reading from the N-terminus, the 483-residue chain is Cobyric acid synthase (483 aa).

Residues 251–438 (SLVVAVPMLP…LHGVFNADEF (188 aa)) form the GATase cobBQ-type domain. Cysteine 333 (nucleophile) is an active-site residue. Histidine 430 is an active-site residue.

Belongs to the CobB/CobQ family. CobQ subfamily.

Its pathway is cofactor biosynthesis; adenosylcobalamin biosynthesis. In terms of biological role, catalyzes amidations at positions B, D, E, and G on adenosylcobyrinic A,C-diamide. NH(2) groups are provided by glutamine, and one molecule of ATP is hydrogenolyzed for each amidation. This is Cobyric acid synthase from Brucella anthropi (strain ATCC 49188 / DSM 6882 / CCUG 24695 / JCM 21032 / LMG 3331 / NBRC 15819 / NCTC 12168 / Alc 37) (Ochrobactrum anthropi).